A 111-amino-acid chain; its full sequence is UPF0060 membrane protein Aave_2845 (111 aa).

Helical transmembrane passes span 7 to 27, 33 to 53, 63 to 83, and 90 to 110; these read FLLY…PWLW, SAWL…LLTL, AAYG…VDGI, and LAGA…PRGA.

It belongs to the UPF0060 family.

It is found in the cell inner membrane. This chain is UPF0060 membrane protein Aave_2845, found in Paracidovorax citrulli (strain AAC00-1) (Acidovorax citrulli).